The chain runs to 683 residues: MIDQYKHKQLQIGLVSPQQIKAWAKKILPNGEVVGEVTRPSTFHYKTDKPEKDGLFCERIFGPIKSGICACGNSRASVRENEDERFCQKCGVEFVDSRIRRYQMGYIKLACPVTHVWYLKGLPSYIANLLDKPLKKLEGLVYGDFSFARPSAKKPTFLRLRGLFEDEISSCNHSISPFFSTPGFATFRNREIATGAGAIREQLADLDLRIIIENSLVEWKELEDEGYSGDEWEDRKRRIRKVFLIRRMQLAKHFIQTNVEPEWMVLCLLPVLPPELRPIVYRSGDKVVTSDINELYKRVIRRNNNLAYLLKRSELAPADLVMCQEKLVQEAVDTLLDSGSRGQPTRDGHNKVYKSLSDVIEGKEGRFRETLLGKRVDYSGRSVIVVGPSLSLHQCGLPLEIAIKLFQLFVIRDLITKRATSNVRIAKRKIWEKEPIVWEILQEVMRGHPVLLNRAPTLHRLGIQAFQPTLVEGRTICLHPLVCKGFNADFDGDQMAVHLPLSLEAQAEARLLMFSHMNLLSPAIGDPICVPTQDMLIGLYVLTIGNRLGICANRYNSCGNSPNKKVNYNNNNYYKYTKDKEPHFSSSYDALGAYRQKRIGLNSPLWLRWKLDQRIVGSREVPIEVQYESFGTYHEIYAHYLVVGNRKKEIRSIYIRTTLGHISFYREIEEAIQGFSRAYSYTI.

Positions 69, 71, 87, and 90 each coordinate Zn(2+). 3 residues coordinate Mg(2+): aspartate 489, aspartate 491, and aspartate 493.

The protein belongs to the RNA polymerase beta' chain family. RpoC1 subfamily. In terms of assembly, in plastids the minimal PEP RNA polymerase catalytic core is composed of four subunits: alpha, beta, beta', and beta''. When a (nuclear-encoded) sigma factor is associated with the core the holoenzyme is formed, which can initiate transcription. Mg(2+) serves as cofactor. Requires Zn(2+) as cofactor.

Its subcellular location is the plastid. The protein resides in the chloroplast. The catalysed reaction is RNA(n) + a ribonucleoside 5'-triphosphate = RNA(n+1) + diphosphate. DNA-dependent RNA polymerase catalyzes the transcription of DNA into RNA using the four ribonucleoside triphosphates as substrates. The sequence is that of DNA-directed RNA polymerase subunit beta' from Zea mays (Maize).